The chain runs to 1203 residues: DNA-directed RNA polymerase subunit beta' (1203 aa).

Positions 60, 62, 75, and 78 each coordinate Zn(2+). Residues D449, D451, and D453 each coordinate Mg(2+). Positions 818, 892, 899, and 902 each coordinate Zn(2+).

The protein belongs to the RNA polymerase beta' chain family. In terms of assembly, the RNAP catalytic core consists of 2 alpha, 1 beta, 1 beta' and 1 omega subunit. When a sigma factor is associated with the core the holoenzyme is formed, which can initiate transcription. Requires Mg(2+) as cofactor. The cofactor is Zn(2+).

It catalyses the reaction RNA(n) + a ribonucleoside 5'-triphosphate = RNA(n+1) + diphosphate. In terms of biological role, DNA-dependent RNA polymerase catalyzes the transcription of DNA into RNA using the four ribonucleoside triphosphates as substrates. This chain is DNA-directed RNA polymerase subunit beta', found in Bacillus cereus (strain ZK / E33L).